The following is a 330-amino-acid chain: Trans-1,2-dihydrobenzene-1,2-diol dehydrogenase (330 aa).

It belongs to the Gfo/Idh/MocA family. Homodimer.

The catalysed reaction is (1R,2R)-1,2-dihydrobenzene-1,2-diol + NADP(+) = catechol + NADPH + H(+). The enzyme catalyses D-xylose + NADP(+) = D-xylono-1,5-lactone + NADPH + H(+). This is Trans-1,2-dihydrobenzene-1,2-diol dehydrogenase (dhdh) from Xenopus laevis (African clawed frog).